Consider the following 701-residue polypeptide: Elongation factor G (701 aa).

In terms of domain architecture, tr-type G spans 11–287; that stretch reads NKVRNIGIMA…AVVDYLPSPL (277 aa). GTP-binding positions include 20-27, 84-88, and 138-141; these read AHIDAGKT, DTPGH, and NKMD.

This sequence belongs to the TRAFAC class translation factor GTPase superfamily. Classic translation factor GTPase family. EF-G/EF-2 subfamily.

The protein resides in the cytoplasm. Its function is as follows. Catalyzes the GTP-dependent ribosomal translocation step during translation elongation. During this step, the ribosome changes from the pre-translocational (PRE) to the post-translocational (POST) state as the newly formed A-site-bound peptidyl-tRNA and P-site-bound deacylated tRNA move to the P and E sites, respectively. Catalyzes the coordinated movement of the two tRNA molecules, the mRNA and conformational changes in the ribosome. This Mycobacterium sp. (strain JLS) protein is Elongation factor G.